A 227-amino-acid chain; its full sequence is AN1-type zinc finger protein 3 (227 aa).

The segment at 12 to 44 (PSLPPRCPCGFWGSSKTMNLCSKCFADFQKKQP) adopts an A20-type zinc-finger fold. Cysteine 18, cysteine 20, cysteine 32, and cysteine 35 together coordinate Zn(2+). The tract at residues 41–151 (KKQPDDDSTP…RPEESGRSKQ (111 aa)) is disordered. Composition is skewed to low complexity over residues 49-59 (TPSTSNSQSDL) and 66-77 (SDNNNTSVTTPT). Composition is skewed to polar residues over residues 78–94 (LSPS…VTSP) and 111–127 (ITPT…SESE). Over residues 135–148 (RLVENPERPEESGR) the composition is skewed to basic and acidic residues. An AN1-type zinc finger spans residues 151–200 (QKSRRRCFQCQTKLELVQQELGSCRCGYVFCMLHRLPEQHDCTFDHMGRG). Zn(2+) contacts are provided by cysteine 157, cysteine 160, cysteine 174, cysteine 176, cysteine 181, histidine 184, histidine 190, and cysteine 192.

The polypeptide is AN1-type zinc finger protein 3 (Zfand3) (Rattus norvegicus (Rat)).